The following is a 201-amino-acid chain: Holliday junction resolvase RecU (201 aa).

The disordered stretch occupies residues 1–26 (MAIGYPNGKKYAASQEELPQQKRKAP). Residues Thr-87, Asp-89, Glu-102, and Gln-121 each coordinate Mg(2+).

Belongs to the RecU family. Requires Mg(2+) as cofactor.

The protein localises to the cytoplasm. The catalysed reaction is Endonucleolytic cleavage at a junction such as a reciprocal single-stranded crossover between two homologous DNA duplexes (Holliday junction).. In terms of biological role, endonuclease that resolves Holliday junction intermediates in genetic recombination. Cleaves mobile four-strand junctions by introducing symmetrical nicks in paired strands. Promotes annealing of linear ssDNA with homologous dsDNA. Required for DNA repair, homologous recombination and chromosome segregation. The sequence is that of Holliday junction resolvase RecU from Listeria monocytogenes serotype 4a (strain HCC23).